The primary structure comprises 463 residues: uncharacterized protein (463 aa).

It belongs to the mycobacterial PPE family.

This is an uncharacterized protein from Mycobacterium tuberculosis (strain ATCC 25618 / H37Rv).